We begin with the raw amino-acid sequence, 337 residues long: Inositol 2-dehydrogenase (337 aa).

This sequence belongs to the Gfo/Idh/MocA family. In terms of assembly, homotetramer.

The enzyme catalyses myo-inositol + NAD(+) = scyllo-inosose + NADH + H(+). Functionally, involved in the oxidation of myo-inositol (MI) to 2-keto-myo-inositol (2KMI or 2-inosose). In Pseudarthrobacter chlorophenolicus (strain ATCC 700700 / DSM 12829 / CIP 107037 / JCM 12360 / KCTC 9906 / NCIMB 13794 / A6) (Arthrobacter chlorophenolicus), this protein is Inositol 2-dehydrogenase.